A 230-amino-acid chain; its full sequence is MAKNKRLTAAQATVERNKPYGLSEAVALVKSNAKAKFDETIEISLNLGIDPRHADQMVRGLISLPNGTGKTLRVGVFARGPKAEEALAAGAEVVGAEDLAEKIQAGEIDFDRCIATPDMMALVGRLGKILGPRGLMPNPRLGTVTMDVKGAITAAKSGQVEYRAEKAGIIHAGVGKASFDEAKLVENINALVDAVQKARPTGAKGTYLKKAALSSTMGPGVRVDVASFEA.

It belongs to the universal ribosomal protein uL1 family. As to quaternary structure, part of the 50S ribosomal subunit.

Binds directly to 23S rRNA. The L1 stalk is quite mobile in the ribosome, and is involved in E site tRNA release. Its function is as follows. Protein L1 is also a translational repressor protein, it controls the translation of the L11 operon by binding to its mRNA. This chain is Large ribosomal subunit protein uL1, found in Gluconobacter oxydans (strain 621H) (Gluconobacter suboxydans).